The following is a 278-amino-acid chain: Shikimate dehydrogenase (NADP(+)) (278 aa).

Residues 18–20 (SRS) and T65 contribute to the shikimate site. The Proton acceptor role is filled by K69. Position 80 (E80) interacts with NADP(+). Residues N89 and D104 each coordinate shikimate. Residues 129–133 (GAGGS) and L218 contribute to the NADP(+) site. A shikimate-binding site is contributed by Y220. G241 contacts NADP(+).

The protein belongs to the shikimate dehydrogenase family. Homodimer.

It carries out the reaction shikimate + NADP(+) = 3-dehydroshikimate + NADPH + H(+). The protein operates within metabolic intermediate biosynthesis; chorismate biosynthesis; chorismate from D-erythrose 4-phosphate and phosphoenolpyruvate: step 4/7. Its function is as follows. Involved in the biosynthesis of the chorismate, which leads to the biosynthesis of aromatic amino acids. Catalyzes the reversible NADPH linked reduction of 3-dehydroshikimate (DHSA) to yield shikimate (SA). This chain is Shikimate dehydrogenase (NADP(+)), found in Rhodopseudomonas palustris (strain ATCC BAA-98 / CGA009).